Consider the following 382-residue polypeptide: Lipid-A-disaccharide synthase (382 aa).

The protein belongs to the LpxB family.

It catalyses the reaction 2-N,3-O-bis[(3R)-3-hydroxytetradecanoyl]-alpha-D-glucosaminyl 1-phosphate + UDP-2-N,3-O-bis[(3R)-3-hydroxytetradecanoyl]-alpha-D-glucosamine = lipid A disaccharide (E. coli) + UDP + H(+). The catalysed reaction is a lipid X + a UDP-2-N,3-O-bis[(3R)-3-hydroxyacyl]-alpha-D-glucosamine = a lipid A disaccharide + UDP + H(+). It participates in glycolipid biosynthesis; lipid IV(A) biosynthesis; lipid IV(A) from (3R)-3-hydroxytetradecanoyl-[acyl-carrier-protein] and UDP-N-acetyl-alpha-D-glucosamine: step 5/6. Functionally, condensation of UDP-2,3-diacylglucosamine and 2,3-diacylglucosamine-1-phosphate to form lipid A disaccharide, a precursor of lipid A, a phosphorylated glycolipid that anchors the lipopolysaccharide to the outer membrane of the cell. In Escherichia coli O17:K52:H18 (strain UMN026 / ExPEC), this protein is Lipid-A-disaccharide synthase.